Reading from the N-terminus, the 97-residue chain is Sperm-associated acrosin inhibitor (97 aa).

The signal sequence occupies residues 1-26 (MAFFSSRVRALFILVLVLPLCSETGF). In terms of domain architecture, Kazal-like spans 32–90 (TRKEPDCDVYRSHLFFCTREMDPICGTNGKSYANPCIFCSEKLGRNEKFDFGHWGHCRE). Disulfide bonds link Cys38–Cys70, Cys48–Cys67, and Cys56–Cys88.

Seminal plasma.

Its subcellular location is the secreted. Its function is as follows. Inhibits acrosin. This Sus scrofa (Pig) protein is Sperm-associated acrosin inhibitor.